A 104-amino-acid chain; its full sequence is Large ribosomal subunit protein uL24 (104 aa).

The protein belongs to the universal ribosomal protein uL24 family. As to quaternary structure, part of the 50S ribosomal subunit.

One of two assembly initiator proteins, it binds directly to the 5'-end of the 23S rRNA, where it nucleates assembly of the 50S subunit. In terms of biological role, one of the proteins that surrounds the polypeptide exit tunnel on the outside of the subunit. This Baumannia cicadellinicola subsp. Homalodisca coagulata protein is Large ribosomal subunit protein uL24.